Consider the following 546-residue polypeptide: MAAKDVVFGDSARSKMVEGVNILANAVKVTLGPKGRNVVLERSFGGPTVTKDGVSVAKEIELKDKLQNMGAQMVKEVASKTSDNAGDGTTTATVLAQSIVREGMKYVASGMNPMDLKRGIDKAVAAAVEELKKISKPCTTNKEIAQVGSISANSDSSIGDRIAEAMDKVGKEGVITVEDGKSLADELDVVEGMQFDRGYLSPYFINNPDKQVAVLDNPFVLLHDKKVSNIRDLLPVLEQVAKAGRPLLIIAEDVEGEALATLVVNNIRGILKTVAVKAPGFGDRRKAMLEDIAILTGGQVIAEETGLTLEKATLAELGQAKRIEVGKENTTIIDGAGEAASIEARVKQVRAQIEEATSDYDREKLQERVAKLAGGVAVIKVGAATEVEMKEKKARVEDALHATRAAVEEGIVAGGGVALIRARTAIAGLTGANADQNAGIKIVLRAMEEPLRQIVTNGGEEASVVVAAVAAGKGNYGYNAATGEYVDMVEAGVVDPTKVTRTALQNAASVAGLLLTTDAAVAELPKEDAPMPGGMPGGMGGMGMDM.

Residues 30–33 (TLGP), K51, 87–91 (DGTTT), G415, 479–481 (NAA), and D495 each bind ATP. The segment at 526–546 (KEDAPMPGGMPGGMGGMGMDM) is disordered. The span at 534-546 (GMPGGMGGMGMDM) shows a compositional bias: gly residues.

The protein belongs to the chaperonin (HSP60) family. Forms a cylinder of 14 subunits composed of two heptameric rings stacked back-to-back. Interacts with the co-chaperonin GroES.

The protein localises to the cytoplasm. It carries out the reaction ATP + H2O + a folded polypeptide = ADP + phosphate + an unfolded polypeptide.. Its function is as follows. Together with its co-chaperonin GroES, plays an essential role in assisting protein folding. The GroEL-GroES system forms a nano-cage that allows encapsulation of the non-native substrate proteins and provides a physical environment optimized to promote and accelerate protein folding. This Burkholderia cepacia (Pseudomonas cepacia) protein is Chaperonin GroEL.